Consider the following 168-residue polypeptide: Troponin I, cardiac muscle (168 aa).

Over residues 128-147 (VRKDDAEKESREVGDWRKNV) the composition is skewed to basic and acidic residues. The segment at 128–168 (VRKDDAEKESREVGDWRKNVDALSGMEGRKKKFEAPGGGQG) is disordered.

Belongs to the troponin I family. As to quaternary structure, binds to actin and tropomyosin.

Troponin I is the inhibitory subunit of troponin, the thin filament regulatory complex which confers calcium-sensitivity to striated muscle actomyosin ATPase activity. In Gallus gallus (Chicken), this protein is Troponin I, cardiac muscle (TNNI3).